The chain runs to 381 residues: UDP-N-acetylglucosamine--N-acetylmuramyl-(pentapeptide) pyrophosphoryl-undecaprenol N-acetylglucosamine transferase (381 aa).

Residues 10–12, Asn124, Arg165, Ser207, Ile263, and Gln308 contribute to the UDP-N-acetyl-alpha-D-glucosamine site; that span reads TGG.

The protein belongs to the glycosyltransferase 28 family. MurG subfamily.

It localises to the cell inner membrane. The enzyme catalyses di-trans,octa-cis-undecaprenyl diphospho-N-acetyl-alpha-D-muramoyl-L-alanyl-D-glutamyl-meso-2,6-diaminopimeloyl-D-alanyl-D-alanine + UDP-N-acetyl-alpha-D-glucosamine = di-trans,octa-cis-undecaprenyl diphospho-[N-acetyl-alpha-D-glucosaminyl-(1-&gt;4)]-N-acetyl-alpha-D-muramoyl-L-alanyl-D-glutamyl-meso-2,6-diaminopimeloyl-D-alanyl-D-alanine + UDP + H(+). Its pathway is cell wall biogenesis; peptidoglycan biosynthesis. Its function is as follows. Cell wall formation. Catalyzes the transfer of a GlcNAc subunit on undecaprenyl-pyrophosphoryl-MurNAc-pentapeptide (lipid intermediate I) to form undecaprenyl-pyrophosphoryl-MurNAc-(pentapeptide)GlcNAc (lipid intermediate II). This chain is UDP-N-acetylglucosamine--N-acetylmuramyl-(pentapeptide) pyrophosphoryl-undecaprenol N-acetylglucosamine transferase, found in Trichlorobacter lovleyi (strain ATCC BAA-1151 / DSM 17278 / SZ) (Geobacter lovleyi).